A 406-amino-acid polypeptide reads, in one-letter code: Arginine biosynthesis bifunctional protein ArgJ (406 aa).

Substrate contacts are provided by Thr-156, Lys-182, Thr-193, Glu-279, Asn-401, and Thr-406. Thr-193 functions as the Nucleophile in the catalytic mechanism.

This sequence belongs to the ArgJ family. As to quaternary structure, heterotetramer of two alpha and two beta chains.

It is found in the cytoplasm. The enzyme catalyses N(2)-acetyl-L-ornithine + L-glutamate = N-acetyl-L-glutamate + L-ornithine. The catalysed reaction is L-glutamate + acetyl-CoA = N-acetyl-L-glutamate + CoA + H(+). It participates in amino-acid biosynthesis; L-arginine biosynthesis; L-ornithine and N-acetyl-L-glutamate from L-glutamate and N(2)-acetyl-L-ornithine (cyclic): step 1/1. It functions in the pathway amino-acid biosynthesis; L-arginine biosynthesis; N(2)-acetyl-L-ornithine from L-glutamate: step 1/4. Its function is as follows. Catalyzes two activities which are involved in the cyclic version of arginine biosynthesis: the synthesis of N-acetylglutamate from glutamate and acetyl-CoA as the acetyl donor, and of ornithine by transacetylation between N(2)-acetylornithine and glutamate. This Bacillus licheniformis (strain ATCC 14580 / DSM 13 / JCM 2505 / CCUG 7422 / NBRC 12200 / NCIMB 9375 / NCTC 10341 / NRRL NRS-1264 / Gibson 46) protein is Arginine biosynthesis bifunctional protein ArgJ.